Reading from the N-terminus, the 591-residue chain is Probable acetolactate synthase large subunit (591 aa).

Thiamine diphosphate is bound at residue Glu47. FAD is bound by residues Arg149, 258-279, and 301-320; these read HGTKAANYAVTECDVLIAIGCR and DIDPAEIGKNVRADIPIVGD. The thiamine pyrophosphate binding stretch occupies residues 396–476; that stretch reads QNQMWMAHFF…VVICIFDNRT (81 aa). Mg(2+)-binding residues include Asp447 and Asn474.

Belongs to the TPP enzyme family. Dimer of large and small chains. Mg(2+) is required as a cofactor. It depends on thiamine diphosphate as a cofactor.

It catalyses the reaction 2 pyruvate + H(+) = (2S)-2-acetolactate + CO2. The protein operates within amino-acid biosynthesis; L-isoleucine biosynthesis; L-isoleucine from 2-oxobutanoate: step 1/4. It functions in the pathway amino-acid biosynthesis; L-valine biosynthesis; L-valine from pyruvate: step 1/4. The polypeptide is Probable acetolactate synthase large subunit (ilvB) (Methanocaldococcus jannaschii (strain ATCC 43067 / DSM 2661 / JAL-1 / JCM 10045 / NBRC 100440) (Methanococcus jannaschii)).